The primary structure comprises 401 residues: cAMP-dependent protein kinase type II-alpha regulatory subunit (401 aa).

Position 2 is an N-acetylserine (S2). Residues 2 to 135 (SHIQIPPGLT…RLQEACKDIL (134 aa)) form a dimerization and phosphorylation region. The segment at 43–65 (ARSRASTPPAAPPSGSQDFDPGA) is disordered. Residues 46-58 (RASTPPAAPPSGS) show a composition bias toward low complexity. Phosphoserine is present on residues S48, S75, and S77. Phosphoserine; by PKA is present on S96. 3',5'-cyclic AMP-binding positions include 136 to 257 (LFKN…ESVP), E205, R214, 258 to 401 (LLKS…DPGQ), E335, and R344. Residue T212 is modified to Phosphothreonine; by PDPK1. Phosphoserine is present on residues S347 and S392.

This sequence belongs to the cAMP-dependent kinase regulatory chain family. As to quaternary structure, the inactive form of the enzyme is composed of two regulatory chains and two catalytic chains. Activation by cAMP produces two active catalytic monomers and a regulatory dimer that binds four cAMP molecules. Interacts with AKAP4 and CBFA2T3. Interacts with the phosphorylated form of PJA2. Interacts with MYRIP; this interaction may link PKA to components of the exocytosis machinery, thus facilitating exocytosis, including insulin release. Forms a complex composed of PRKAR2A, GSK3B and GSKIP through GSKIP interaction; facilitates PKA-induced phosphorylation and regulates GSK3B activity. Interacts with ADCY8; inhibits adenylate cyclase activity through PKA phosphorylation. In terms of processing, a second phosphorylation site has not been located. Post-translationally, phosphorylation of Thr-212 by PDPK1 seems to attenuate the activity of PKA, perhaps by strengthening interaction between the regulatory and the catalytic subunits. As to expression, four types of regulatory chains are found: I-alpha, I-beta, II-alpha, and II-beta. Their expression varies among tissues and is in some cases constitutive and in others inducible.

Its subcellular location is the cytoplasm. It localises to the cell membrane. Functionally, regulatory subunit of the cAMP-dependent protein kinases involved in cAMP signaling in cells. Type II regulatory chains mediate membrane association by binding to anchoring proteins, including the MAP2 kinase. The sequence is that of cAMP-dependent protein kinase type II-alpha regulatory subunit (PRKAR2A) from Bos taurus (Bovine).